Consider the following 631-residue polypeptide: Golgin subfamily A member 8A (631 aa).

The span at 1–20 shows a compositional bias: basic and acidic residues; sequence MLPVDGEERKSEGSDTEGDR. Disordered stretches follow at residues 1–103, 127–154, 426–447, and 488–520; these read MLPV…QEQA, KKQVEHQLEEEKKANNEKQKAERELEGQ, TSAEKEPEAAVPASGTGGESSG, and PGDSAKDASPGGGHHQAGPGQGGEEGEAAGAAG. Low complexity predominate over residues 78 to 92; that stretch reads SLYLSPKSSSASSSL. Residues 93–103 are compositionally biased toward polar residues; it reads HARQSPCQEQA. Positions 110–468 form a coiled coil; sequence SIKISRLNDT…REHVEKLELG (359 aa). Residues 128–152 show a composition bias toward basic and acidic residues; sequence KQVEHQLEEEKKANNEKQKAERELE. A compositionally biased stretch (gly residues) spans 497–510; the sequence is PGGGHHQAGPGQGG. The segment at 519–631 is golgi-targeting domain; that stretch reads AGDGVAACGS…CWAWLPRRRR (113 aa).

It belongs to the GOLGA8 family.

The protein resides in the golgi apparatus. It is found in the golgi stack membrane. In terms of biological role, may be involved in maintaining Golgi structure. The protein is Golgin subfamily A member 8A (GOLGA8A) of Homo sapiens (Human).